Reading from the N-terminus, the 326-residue chain is UDP-N-acetylglucosamine transporter (326 aa).

8 helical membrane passes run 4–24 (NLKY…VLTM), 38–58 (LSST…IFLV), 136–156 (LGMY…FVQW), 174–194 (FVGL…GVYF), 212–232 (LGFF…GELV), 243–263 (QLTW…AAVI), 269–289 (ILKG…SYFW), and 293–313 (FVPT…TFLY).

It belongs to the nucleotide-sugar transporter family. SLC35A subfamily. Interacts with SLC35A2; the interaction is reduced in the presence of SLC35A4. Found in a complex with SLC35A2 and SLC35A4. Interacts with MGAT4B. O-Glcnacylation regulates the stability of SLC35A3 and the specific complex formation with MGAT4B.

It localises to the golgi apparatus membrane. The catalysed reaction is UMP(out) + UDP-N-acetyl-alpha-D-glucosamine(in) = UMP(in) + UDP-N-acetyl-alpha-D-glucosamine(out). Functionally, transports diphosphate-N-acetylglucosamine (UDP-GlcNAc) from the cytosol into the lumen of the Golgi apparatus, functioning as an antiporter that exchanges UDP-N-acetyl-alpha-D-glucosamine for UMP. May supply UDP-GlcNAc as substrate for Golgi-resident glycosyltransferases that generate highly branched, multiantennary complex N-glycans and keratan sulfate. However, the exact role of SLC35A3 still needs to be elucidated, it could be a member of a catalytically more efficient multiprotein complex rather than function independently as a single transporter. The protein is UDP-N-acetylglucosamine transporter (Slc35a3) of Rattus norvegicus (Rat).